The sequence spans 592 residues: MTINLHRPDIAELKPRITVFGVGGGGGNAVNNMINAGLQGVDFVVANTDAQALAMSKAERVIQLGAAVTEGLGAGALPEVGQAAADECIDEIIDHLADSHMVFITAGMGGGTGTGAAPVVARAAREKGILTVGVVTKPFQFEGARRMKTAEAGIEELQKSVDTLIVIPNQNLFRIANEKTTFADAFAMADQVLYSGVASITDLMIKEGLINLDFADVRSVMHEMGRAMMGTGEASGEGRALAAAEAAIANPLLDETSMCGARGLLISITGGRDMTLFEVDEAANRIREEVDADANVIFGAIDDESLEGVIRVSVVATGIDRLASDVVQPSHSKFQKSVSSVRKNDSGINQTASHPQSSQLRSESMVETIESLEVEVSQSQPVEEMFSPKSQIFAKPTDTASTSSRSAATYPFGHGQSDIYGKISNASRIQVNSIPQQSTAAAVSMEATAHVLSEMTNIVEQSEEKQAQIQPYIAPARMPELKDFSPFTHGQGIHSSGLEQGPRSLWQRLKQSLTYREEIEPEARLEPAVKPLQNEESHIYNKNVQKVSSQDSSVYAPHRSTKLQSRALQDQRAFVNEEDQLEIPAFLRRQAN.

GTP is bound by residues 24-28 (GGGGN), 111-113 (GTG), Glu142, Arg146, and Asp190. Positions 333–362 (KFQKSVSSVRKNDSGINQTASHPQSSQLRS) are disordered.

Belongs to the FtsZ family. In terms of assembly, homodimer. Polymerizes to form a dynamic ring structure in a strictly GTP-dependent manner. Interacts directly with several other division proteins.

It localises to the cytoplasm. Essential cell division protein that forms a contractile ring structure (Z ring) at the future cell division site. The regulation of the ring assembly controls the timing and the location of cell division. One of the functions of the FtsZ ring is to recruit other cell division proteins to the septum to produce a new cell wall between the dividing cells. Binds GTP and shows GTPase activity. The sequence is that of Cell division protein FtsZ from Bartonella bacilliformis.